Reading from the N-terminus, the 912-residue chain is Serine/threonine-protein kinase D1 (912 aa).

Phosphotyrosine is present on Tyr95. The Phorbol-ester/DAG-type 1 zinc finger occupies 146–196; sequence PHALFVHSYRAPAFCDHCGEMLWGLVRQGLKCEGCGLNYHKRCAFKIPNNC. Phosphoserine occurs at positions 205, 208, 219, and 223. A Phorbol-ester/DAG-type 2 zinc finger spans residues 270–320; it reads PHTFVIHSYTRPTVCQYCKKLLKGLFRQGLQCKDCRFNCHKRCAPKVPNNC. A Phosphoserine modification is found at Ser345. The tract at residues 377–402 is disordered; it reads NDSGEMQDPDPDHEDANRTISPSTSN. Phosphoserine; by MAPK13 is present on residues Ser397 and Ser401. Residues 422-541 form the PH domain; that stretch reads TVMKEGWMVH…WEIAIQHALM (120 aa). Phosphotyrosine is present on Tyr432. The residue at position 448 (Ser448) is a Phosphoserine. A Phosphotyrosine; by ABL modification is found at Tyr463. At Ser473 the chain carries Phosphoserine. Tyr502 is modified (phosphotyrosine). Ser548 is modified (phosphoserine). The Protein kinase domain occupies 583–839; it reads IFPDEVLGSG…VDKTLSHPWL (257 aa). Residues 589–597 and Lys612 each bind ATP; that span reads LGSGQFGIV. Catalysis depends on Asp706, which acts as the Proton acceptor. A Phosphoserine; by PKC/PRKCD modification is found at Ser738. The residue at position 742 (Ser742) is a Phosphoserine; by autocatalysis and PKC/PRKCD. The residue at position 749 (Tyr749) is a Phosphotyrosine. A Phosphoserine; by autocatalysis modification is found at Ser910.

Belongs to the protein kinase superfamily. CAMK Ser/Thr protein kinase family. PKD subfamily. As to quaternary structure, interacts (via N-terminus) with ADAP1/CENTA1. Interacts with MAPK13. Interacts with DAPK1 in an oxidative stress-regulated manner. Interacts with USP28; the interaction induces phosphorylation of USP28 and activated KRAS-mediated stabilization of ZNF304. Interacts with AKAP13 (via C-terminal domain). The cofactor is Mg(2+). In terms of processing, phosphorylated at Ser-397 and Ser-401 by MAPK13 during regulation of insulin secretion in pancreatic beta cells. Phosphorylated by DAPK1. Phosphorylated at Tyr-95 and by ABL at Tyr-463, which primes the kinase in response to oxidative stress, and promotes a second step activating phosphorylation at Ser-738/Ser-742 by PKRD. Phosphorylated on Ser-910 upon S.enterica infection in macrophages.

It is found in the cytoplasm. Its subcellular location is the cell membrane. The protein localises to the golgi apparatus. It localises to the trans-Golgi network. The enzyme catalyses L-seryl-[protein] + ATP = O-phospho-L-seryl-[protein] + ADP + H(+). It carries out the reaction L-threonyl-[protein] + ATP = O-phospho-L-threonyl-[protein] + ADP + H(+). Its activity is regulated as follows. Activated by DAG and phorbol esters. Phorbol-ester/DAG-type domain 1 binds DAG with high affinity and appears to play the dominant role in mediating translocation to the cell membrane and trans-Golgi network. Phorbol-ester/DAG-type domain 2 binds phorbol ester with higher affinity. Autophosphorylation of Ser-742 and phosphorylation of Ser-738 by PKC relieves auto-inhibition by the PH domain. Phosphorylation on Tyr-463 by the SRC-ABL1 pathway in response to oxidative stress, is also required for activation. Activated by DAPK1 under oxidative stress. Functionally, serine/threonine-protein kinase that converts transient diacylglycerol (DAG) signals into prolonged physiological effects downstream of PKC, and is involved in the regulation of MAPK8/JNK1 and Ras signaling, Golgi membrane integrity and trafficking, cell survival through NF-kappa-B activation, cell migration, cell differentiation by mediating HDAC7 nuclear export, cell proliferation via MAPK1/3 (ERK1/2) signaling, and plays a role in cardiac hypertrophy, VEGFA-induced angiogenesis, genotoxic-induced apoptosis and flagellin-stimulated inflammatory response. Phosphorylates the epidermal growth factor receptor (EGFR) on dual threonine residues, which leads to the suppression of epidermal growth factor (EGF)-induced MAPK8/JNK1 activation and subsequent JUN phosphorylation. Phosphorylates RIN1, inducing RIN1 binding to 14-3-3 proteins YWHAB, YWHAE and YWHAZ and increased competition with RAF1 for binding to GTP-bound form of Ras proteins (NRAS, HRAS and KRAS). Acts downstream of the heterotrimeric G-protein beta/gamma-subunit complex to maintain the structural integrity of the Golgi membranes, and is required for protein transport along the secretory pathway. In the trans-Golgi network (TGN), regulates the fission of transport vesicles that are on their way to the plasma membrane. May act by activating the lipid kinase phosphatidylinositol 4-kinase beta (PI4KB) at the TGN for the local synthesis of phosphorylated inositol lipids, which induces a sequential production of DAG, phosphatidic acid (PA) and lyso-PA (LPA) that are necessary for membrane fission and generation of specific transport carriers to the cell surface. Under oxidative stress, is phosphorylated at Tyr-463 via SRC-ABL1 and contributes to cell survival by activating IKK complex and subsequent nuclear translocation and activation of NFKB1. Involved in cell migration by regulating integrin alpha-5/beta-3 recycling and promoting its recruitment in newly forming focal adhesion. In osteoblast differentiation, mediates the bone morphogenetic protein 2 (BMP2)-induced nuclear export of HDAC7, which results in the inhibition of HDAC7 transcriptional repression of RUNX2. In neurons, plays an important role in neuronal polarity by regulating the biogenesis of TGN-derived dendritic vesicles, and is involved in the maintenance of dendritic arborization and Golgi structure in hippocampal cells. May potentiate mitogenesis induced by the neuropeptide bombesin or vasopressin by mediating an increase in the duration of MAPK1/3 (ERK1/2) signaling, which leads to accumulation of immediate-early gene products including FOS that stimulate cell cycle progression. Plays an important role in the proliferative response induced by low calcium in keratinocytes, through sustained activation of MAPK1/3 (ERK1/2) pathway. Downstream of novel PKC signaling, plays a role in cardiac hypertrophy by phosphorylating HDAC5, which in turn triggers XPO1/CRM1-dependent nuclear export of HDAC5, MEF2A transcriptional activation and induction of downstream target genes that promote myocyte hypertrophy and pathological cardiac remodeling. Mediates cardiac troponin I (TNNI3) phosphorylation at the PKA sites, which results in reduced myofilament calcium sensitivity, and accelerated crossbridge cycling kinetics. The PRKD1-HDAC5 pathway is also involved in angiogenesis by mediating VEGFA-induced specific subset of gene expression, cell migration, and tube formation. In response to VEGFA, is necessary and required for HDAC7 phosphorylation which induces HDAC7 nuclear export and endothelial cell proliferation and migration. During apoptosis induced by cytarabine and other genotoxic agents, PRKD1 is cleaved by caspase-3 at Asp-378, resulting in activation of its kinase function and increased sensitivity of cells to the cytotoxic effects of genotoxic agents. In epithelial cells, is required for transducing flagellin-stimulated inflammatory responses by binding and phosphorylating TLR5, which contributes to MAPK14/p38 activation and production of inflammatory cytokines. Acts as an activator of NLRP3 inflammasome assembly by mediating phosphorylation of NLRP3. May play a role in inflammatory response by mediating activation of NF-kappa-B. May be involved in pain transmission by directly modulating TRPV1 receptor. Plays a role in activated KRAS-mediated stabilization of ZNF304 in colorectal cancer (CRC) cells. Regulates nuclear translocation of transcription factor TFEB in macrophages upon live S.enterica infection. This chain is Serine/threonine-protein kinase D1 (PRKD1), found in Homo sapiens (Human).